We begin with the raw amino-acid sequence, 317 residues long: Ribosomal protein L11 methyltransferase (317 aa).

Residues threonine 158, glycine 179, aspartate 201, and asparagine 244 each contribute to the S-adenosyl-L-methionine site.

Belongs to the methyltransferase superfamily. PrmA family.

The protein resides in the cytoplasm. The catalysed reaction is L-lysyl-[protein] + 3 S-adenosyl-L-methionine = N(6),N(6),N(6)-trimethyl-L-lysyl-[protein] + 3 S-adenosyl-L-homocysteine + 3 H(+). In terms of biological role, methylates ribosomal protein L11. The sequence is that of Ribosomal protein L11 methyltransferase from Streptococcus pyogenes serotype M4 (strain MGAS10750).